A 565-amino-acid polypeptide reads, in one-letter code: uncharacterized protein (565 aa).

10 helical membrane passes run 28–48 (IFHFYIYCILLGAVLLFLPFA), 73–93 (ASYGFLDALFLAVSAFSDTGL), 109–129 (VLAILLQLGGIGFVVIAFLVW), 169–189 (LFLFMVELLYGFLYTILFYFI), 262–282 (IVIQWLAISQIIFGGIGYPVL), 315–335 (LIVTAWCFLMLLMVEFIVITS), 364–384 (SLIFGPIPAASRVMQLWFGVI), 393–413 (VFPWSAESDIIKGIMVIAMFI), 461–481 (AFLVAVFGLVSVVLIAILLPL), and 526–546 (TLGLLMIMGQVGVSSSVLTFV).

Belongs to the TrkH potassium transport family.

The protein resides in the cell membrane. This is an uncharacterized protein from Mycoplasma pneumoniae (strain ATCC 29342 / M129 / Subtype 1) (Mycoplasmoides pneumoniae).